The sequence spans 1332 residues: Misshapen-like kinase 1 (1332 aa).

Positions 25-289 (FELVEVVGNG…TEQLLKFPFI (265 aa)) constitute a Protein kinase domain. ATP is bound by residues 31 to 39 (VGNGTYGQV) and lysine 54. The active-site Proton acceptor is aspartate 153. Disordered regions lie at residues 300 to 347 (IQLK…NVPG), 363 to 383 (KSNSEALKQQQQLQQQQQRDP), and 395 to 887 (QRRI…GTMV). Over residues 317–333 (EETEYEYSGSEEEDDSH) the composition is skewed to acidic residues. Serine 324 and serine 326 each carry phosphoserine. Residues 371 to 380 (QQQQLQQQQQ) show a composition bias toward low complexity. A compositionally biased stretch (basic and acidic residues) spans 396–466 (RRIEEQKEER…EEQRQSERLQ (71 aa)). Residues 479 to 497 (LQQQQQQQQLQKQQQQQLL) are compositionally biased toward low complexity. An omega-N-methylarginine mark is found at arginine 501 and arginine 509. A compositionally biased stretch (basic and acidic residues) spans 518–528 (AWAREVEERTR). The segment covering 547–561 (PEPPIPQASPGPPGP) has biased composition (pro residues). The span at 598 to 608 (RSQSLQDQPTR) shows a compositional bias: polar residues. Residue serine 641 is modified to Phosphoserine. Residues 670-682 (QRTSSIATALNTS) are compositionally biased toward polar residues. Position 701 is a phosphoserine (serine 701). The span at 716 to 729 (PKPPGPPAQPPGPP) shows a compositional bias: pro residues. Residues 736 to 748 (DLRRSDPGWERSD) are compositionally biased toward basic and acidic residues. Phosphoserine is present on residues serine 754, serine 763, serine 777, serine 778, and serine 782. Positions 804 to 821 (LLKERTLDEAPRPPKKAM) are enriched in basic and acidic residues. Residues 828-841 (EEVESSEDDEEEGE) are compositionally biased toward acidic residues. The interval 866-1332 (MVVHDVEEIT…TLNRNCIMNW (467 aa)) is mediates interaction with RAP2A. At threonine 891 the chain carries Phosphothreonine. The tract at residues 902-943 (DSNGYTNLPDVVQPSHSPTENSKGQSPPSKDGSGDYQSRGLV) is disordered. Positions 915–929 (PSHSPTENSKGQSPP) are enriched in polar residues. The 288-residue stretch at 1019–1306 (NSEILCAALW…KFLCERNDKV (288 aa)) folds into the CNH domain.

This sequence belongs to the protein kinase superfamily. STE Ser/Thr protein kinase family. STE20 subfamily. In terms of assembly, interacts with TANC1. Interacts with RAP2A. Isoform 4 interacts with NCK1. The cofactor is Mg(2+). Post-translationally, autophosphorylated. As to expression, expressed in the brain, isoform 2 is more abundant than isoform 1. Isoform 3 is ubiquitously expressed. Isoform 1 is most abundant in the skeletal muscle. Isoform 4 is ubiquitously expressed with relative high levels in brain, skeletal muscle, pancreas and testis.

It localises to the cytoplasm. Its subcellular location is the postsynaptic density. The protein resides in the cell projection. It is found in the axon. The protein localises to the dendrite. It localises to the golgi apparatus. The enzyme catalyses L-seryl-[protein] + ATP = O-phospho-L-seryl-[protein] + ADP + H(+). It carries out the reaction L-threonyl-[protein] + ATP = O-phospho-L-threonyl-[protein] + ADP + H(+). In terms of biological role, serine/threonine kinase which acts as a negative regulator of Ras-related Rap2-mediated signal transduction to control neuronal structure and AMPA receptor trafficking. Required for normal synaptic density, dendrite complexity, as well as surface AMPA receptor expression in hippocampal neurons. Can activate the JNK and MAPK14/p38 pathways and mediates stimulation of the stress-activated protein kinase MAPK14/p38 MAPK downstream of the Raf/ERK pathway. Phosphorylates TANC1 upon stimulation by RAP2A, MBP and SMAD1. Has an essential function in negative selection of thymocytes, perhaps by coupling NCK1 to activation of JNK1. Activator of the Hippo signaling pathway which plays a pivotal role in organ size control and tumor suppression by restricting proliferation and promoting apoptosis. MAP4Ks act in parallel to and are partially redundant with STK3/MST2 and STK4/MST2 in the phosphorylation and activation of LATS1/2, and establish MAP4Ks as components of the expanded Hippo pathway. Isoform 4 can activate the JNK pathway. Involved in the regulation of actin cytoskeleton reorganization, cell-matrix adhesion, cell-cell adhesion and cell migration. This Homo sapiens (Human) protein is Misshapen-like kinase 1.